We begin with the raw amino-acid sequence, 244 residues long: Ras-related protein Rab-12 (244 aa).

M1 carries the post-translational modification N-acetylmethionine. Over residues 1–10 (MDPGAALQRR) the composition is skewed to low complexity. The tract at residues 1 to 37 (MDPGAALQRRAGGGGGLGAGSPALSGGQGRRRKQPPR) is disordered. Phosphoserine is present on residues S21 and S25. Residue G52 coordinates GDP. GTP-binding residues include G52, V53, G54, K55, and T56. G54, K55, T56, and S57 together coordinate GDP. T56 is a Mg(2+) binding site. 2 consecutive short sequence motifs (switch) follow at residues 65-79 (DTFC…GVDF) and 97-114 (DTAG…YYRS). GTP contacts are provided by S73 and T74. Positions 74 and 97 each coordinate Mg(2+). G100 contributes to the GTP binding site. The residue at position 106 (S106) is a Phosphoserine; by LRRK2. GDP-binding residues include N155, K156, D158, and C159. GTP-binding residues include N155, K156, and D158. Residues S186, A187, and K188 each coordinate GTP. Positions 187 and 188 each coordinate GDP. The segment at 225 to 244 (QPEPEIPPELPPPRPHVRCC) is disordered. Over residues 228–238 (PEIPPELPPPR) the composition is skewed to pro residues. S-geranylgeranyl cysteine attachment occurs at residues C243 and C244.

This sequence belongs to the small GTPase superfamily. Rab family. In terms of assembly, interacts with RABIF. Interacts with OPTN. Interacts with LRRK2; interaction facilitates phosphorylation of Ser-106. Interacts with GDI1, GDI2, CHM and CHML; these interactions are disrupted by phosphorylation on Ser-106. Interacts with RILPL1 and RILPL2; these interactions are dependent on phosphorylation of Ser-106. Mg(2+) serves as cofactor. Phosphorylation of Ser-106 in the switch II region by LRRK2 prevents the association of RAB regulatory proteins, including CHM, CHML and RAB GDP dissociation inhibitors GDI1 and GDI2.

Its subcellular location is the recycling endosome membrane. It localises to the lysosome membrane. The protein resides in the golgi apparatus membrane. It is found in the cytoplasmic vesicle. The protein localises to the autophagosome. It catalyses the reaction GTP + H2O = GDP + phosphate + H(+). Regulated by guanine nucleotide exchange factors (GEFs) including DENND3 which promote the exchange of bound GDP for free GTP. Regulated by GTPase activating proteins (GAPs) which increase the GTP hydrolysis activity. Inhibited by GDP dissociation inhibitors (GDIs). Functionally, the small GTPases Rab are key regulators of intracellular membrane trafficking, from the formation of transport vesicles to their fusion with membranes. Rabs cycle between an inactive GDP-bound form and an active GTP-bound form that is able to recruit to membranes different sets of downstream effectors directly responsible for vesicle formation, movement, tethering and fusion. RAB12 may play a role in protein transport from recycling endosomes to lysosomes regulating, for instance, the degradation of the transferrin receptor. Involved in autophagy. The sequence is that of Ras-related protein Rab-12 from Homo sapiens (Human).